We begin with the raw amino-acid sequence, 601 residues long: DNA replication licensing factor MCM3 (601 aa).

Residues 180-386 enclose the MCM domain; it reads PINLLSKSIA…LDRRLSQHVL (207 aa). Residue 229–236 participates in ATP binding; it reads GDPSTAKS. An Arginine finger motif is present at residues 361-364; that stretch reads SRFD.

It belongs to the MCM family. In terms of assembly, component of the MCM2-7 complex.

It is found in the nucleus. The protein resides in the chromosome. It localises to the nucleoplasm. The enzyme catalyses ATP + H2O = ADP + phosphate + H(+). Acts as a component of the MCM2-7 complex (MCM complex) which is the replicative helicase essential for DNA replication initiation and elongation in eukaryotic cells. Required for DNA replication and cell proliferation. The active ATPase sites in the MCM2-7 ring are formed through the interaction surfaces of two neighboring subunits such that a critical structure of a conserved arginine finger motif is provided in trans relative to the ATP-binding site of the Walker A box of the adjacent subunit. The polypeptide is DNA replication licensing factor MCM3 (Entamoeba histolytica (strain ATCC 30459 / HM-1:IMSS / ABRM)).